We begin with the raw amino-acid sequence, 202 residues long: Small ribosomal subunit protein uS4c-1 (202 aa).

An S4 RNA-binding domain is found at 90 to 152 (MRLDNIVLRA…NKSRQLIDLN (63 aa)).

Belongs to the universal ribosomal protein uS4 family. Part of the 30S ribosomal subunit. Contacts protein S5. The interaction surface between S4 and S5 is involved in control of translational fidelity.

It localises to the plastid. The protein resides in the chloroplast. Functionally, one of the primary rRNA binding proteins, it binds directly to 16S rRNA where it nucleates assembly of the body of the 30S subunit. Its function is as follows. With S5 and S12 plays an important role in translational accuracy. This chain is Small ribosomal subunit protein uS4c-1, found in Cyanidium caldarium (Red alga).